The sequence spans 374 residues: Isocitrate dehydrogenase [NAD] catalytic subunit 6, mitochondrial (374 aa).

A mitochondrion-targeting transit peptide spans 1 to 44 (MTMTAFLARRLIGNGSSQILGTSSSSSGPFISVSRAFFSSSTPI). 4 residues coordinate substrate: Arg127, Arg137, Arg158, and Asp245. Residues Asp245, Asp269, and Asp273 each contribute to the Mg(2+) site.

The protein belongs to the isocitrate and isopropylmalate dehydrogenases family. As to quaternary structure, heterooligomer of catalytic and regulatory subunits. The cofactor is Mg(2+). Mn(2+) serves as cofactor. As to expression, ubiquitous. Predominantly expressed in leaves.

It is found in the mitochondrion. It catalyses the reaction D-threo-isocitrate + NAD(+) = 2-oxoglutarate + CO2 + NADH. In terms of biological role, catalytic subunit of the NAD(+)-dependent isocitrate dehydrogenase involved in the oxidative decarboxylation of isocitrate to 2-oxoglutarate. Performs an essential role in the oxidative function of the citric acid cycle. This chain is Isocitrate dehydrogenase [NAD] catalytic subunit 6, mitochondrial (IDH6), found in Arabidopsis thaliana (Mouse-ear cress).